A 435-amino-acid chain; its full sequence is Cell adhesion molecule 2 (435 aa).

The first 24 residues, 1–24, serve as a signal peptide directing secretion; the sequence is MIWKRSAVLRFYSVCGLLLLGSQG. Residues 25–367 lie on the Extracellular side of the membrane; sequence QFPLTQNVTV…SLAGQNGPDH (343 aa). One can recognise an Ig-like V-type domain in the interval 27–119; sequence PLTQNVTVVE…PVKTSKAYLT (93 aa). 2 N-linked (GlcNAc...) asparagine glycosylation sites follow: Asn-31 and Asn-51. 3 cysteine pairs are disulfide-bonded: Cys-44-Cys-104, Cys-146-Cys-203, and Cys-248-Cys-296. Ig-like C2-type domains are found at residues 127-219 and 227-312; these read PQIS…VAMQ and PSVK…YVLI. An N-linked (GlcNAc...) asparagine glycan is attached at Asn-291. Residues 341-351 are compositionally biased toward low complexity; the sequence is TTSPSTSASSS. A disordered region spans residues 341–360; it reads TTSPSTSASSSSRRDPNSLA. Residues 368 to 388 form a helical membrane-spanning segment; it reads ALIGGIVAVVVFVTLCSIFLL. The Cytoplasmic portion of the chain corresponds to 389-435; sequence GRYLARHKGTYLTNEAKGAEDAPDADTAIINAEGSQVNAEEKKEYFI. Ser-423 bears the Phosphoserine mark.

It belongs to the nectin family. Glycosylation at Asn-51 reduces adhesive binding.

Its subcellular location is the cell membrane. The protein localises to the synapse. The protein resides in the cell projection. It localises to the axon. In terms of biological role, adhesion molecule that engages in homo- and heterophilic interactions with the other nectin-like family members, leading to cell aggregation. Important for synapse organization, providing regulated trans-synaptic adhesion. Preferentially binds to oligodendrocytes. The chain is Cell adhesion molecule 2 (Cadm2) from Rattus norvegicus (Rat).